Consider the following 330-residue polypeptide: Phosphate acyltransferase (330 aa).

Belongs to the PlsX family. In terms of assembly, homodimer. Probably interacts with PlsY.

The protein localises to the cytoplasm. The catalysed reaction is a fatty acyl-[ACP] + phosphate = an acyl phosphate + holo-[ACP]. It participates in lipid metabolism; phospholipid metabolism. Catalyzes the reversible formation of acyl-phosphate (acyl-PO(4)) from acyl-[acyl-carrier-protein] (acyl-ACP). This enzyme utilizes acyl-ACP as fatty acyl donor, but not acyl-CoA. This chain is Phosphate acyltransferase, found in Lactobacillus delbrueckii subsp. bulgaricus (strain ATCC 11842 / DSM 20081 / BCRC 10696 / JCM 1002 / NBRC 13953 / NCIMB 11778 / NCTC 12712 / WDCM 00102 / Lb 14).